Reading from the N-terminus, the 307-residue chain is Transmembrane protein 200B (307 aa).

A disordered region spans residues 1 to 38; it reads MTAGSPEECGEVRRSPEGRVSRLGRRLGRRRRPRSPPE. A compositionally biased stretch (basic and acidic residues) spans 10–20; the sequence is GEVRRSPEGRV. Residues 22–34 are compositionally biased toward basic residues; the sequence is RLGRRLGRRRRPR. A helical transmembrane segment spans residues 53–73; that stretch reads GAFAALGALVVLVGMGIAVAG. Residues 81-111 are disordered; the sequence is APGSRAANASSPQMSELRREGRGGGRAHGPH. A glycan (N-linked (GlcNAc...) asparagine) is linked at Asn-88. The segment covering 96–111 has biased composition (basic and acidic residues); that stretch reads ELRREGRGGGRAHGPH. The chain crosses the membrane as a helical span at residues 116 to 136; sequence LLGPVIMGVGLFVFICANTLL. The disordered stretch occupies residues 180–211; sequence AVGCAEPEIWDPSPRRGTSPVPSVRSLRSEPA.

Belongs to the TMEM200 family.

The protein localises to the membrane. The chain is Transmembrane protein 200B (TMEM200B) from Homo sapiens (Human).